Consider the following 259-residue polypeptide: MGTASRAGIASARRIVVKVGSSSISGENAGQIAPLVDAIAAAHARGAEVVLVSSGAIATGMPFLRLDDRPADLATQQAAAAVGQSVLIFRYQESLDRYGIVAGQVLLTAGDLAAPDHRENAQRAMERLLGLRLLPVVNENDTVATHEIRFGDNDRLAALVARLVDADLLLLLSDVDALYSRPPEEPGARRIEHVAFGDELEGVEIGSTGTGVGTGGAVTKVAAARLAAEAGTGVLLTSTAQVAEALAGAHVGTWFAPRS.

An ATP-binding site is contributed by lysine 18. Substrate contacts are provided by serine 54, aspartate 141, and asparagine 153. Residue serine 173 to aspartate 174 participates in ATP binding.

Belongs to the glutamate 5-kinase family.

The protein localises to the cytoplasm. It catalyses the reaction L-glutamate + ATP = L-glutamyl 5-phosphate + ADP. Its pathway is amino-acid biosynthesis; L-proline biosynthesis; L-glutamate 5-semialdehyde from L-glutamate: step 1/2. Catalyzes the transfer of a phosphate group to glutamate to form L-glutamate 5-phosphate. In Clavibacter sepedonicus (Clavibacter michiganensis subsp. sepedonicus), this protein is Glutamate 5-kinase.